Consider the following 934-residue polypeptide: Leucine--tRNA ligase 1 (934 aa).

The 'HIGH' region motif lies at 41–51; the sequence is PYTNSPMHVGH. Residues 616–620 carry the 'KMSKS' region motif; that stretch reads KMSKS. K619 provides a ligand contact to ATP.

Belongs to the class-I aminoacyl-tRNA synthetase family.

The protein resides in the cytoplasm. It carries out the reaction tRNA(Leu) + L-leucine + ATP = L-leucyl-tRNA(Leu) + AMP + diphosphate. The polypeptide is Leucine--tRNA ligase 1 (Saccharolobus solfataricus (strain ATCC 35092 / DSM 1617 / JCM 11322 / P2) (Sulfolobus solfataricus)).